The primary structure comprises 212 residues: Probable nicotinate-nucleotide adenylyltransferase (212 aa).

Belongs to the NadD family.

The enzyme catalyses nicotinate beta-D-ribonucleotide + ATP + H(+) = deamido-NAD(+) + diphosphate. It participates in cofactor biosynthesis; NAD(+) biosynthesis; deamido-NAD(+) from nicotinate D-ribonucleotide: step 1/1. Its function is as follows. Catalyzes the reversible adenylation of nicotinate mononucleotide (NaMN) to nicotinic acid adenine dinucleotide (NaAD). This is Probable nicotinate-nucleotide adenylyltransferase from Saccharopolyspora erythraea (strain ATCC 11635 / DSM 40517 / JCM 4748 / NBRC 13426 / NCIMB 8594 / NRRL 2338).